The following is a 152-amino-acid chain: Urease accessory protein UreE (152 aa).

This sequence belongs to the UreE family.

It localises to the cytoplasm. Its function is as follows. Involved in urease metallocenter assembly. Binds nickel. Probably functions as a nickel donor during metallocenter assembly. In Citrobacter koseri (strain ATCC BAA-895 / CDC 4225-83 / SGSC4696), this protein is Urease accessory protein UreE.